The sequence spans 288 residues: Putative branched-chain-amino-acid aminotransferase (288 aa).

Lys146 bears the N6-(pyridoxal phosphate)lysine mark.

The protein belongs to the class-IV pyridoxal-phosphate-dependent aminotransferase family. The cofactor is pyridoxal 5'-phosphate.

The enzyme catalyses L-leucine + 2-oxoglutarate = 4-methyl-2-oxopentanoate + L-glutamate. It catalyses the reaction L-isoleucine + 2-oxoglutarate = (S)-3-methyl-2-oxopentanoate + L-glutamate. It carries out the reaction L-valine + 2-oxoglutarate = 3-methyl-2-oxobutanoate + L-glutamate. It participates in amino-acid biosynthesis; L-isoleucine biosynthesis; L-isoleucine from 2-oxobutanoate: step 4/4. The protein operates within amino-acid biosynthesis; L-leucine biosynthesis; L-leucine from 3-methyl-2-oxobutanoate: step 4/4. It functions in the pathway amino-acid biosynthesis; L-valine biosynthesis; L-valine from pyruvate: step 4/4. Acts on leucine, isoleucine and valine. The polypeptide is Putative branched-chain-amino-acid aminotransferase (ilvE) (Methanocaldococcus jannaschii (strain ATCC 43067 / DSM 2661 / JAL-1 / JCM 10045 / NBRC 100440) (Methanococcus jannaschii)).